A 531-amino-acid chain; its full sequence is Tyrosine 2,3-aminomutase (531 aa).

Tyr-51 serves as the catalytic Proton donor/acceptor. Position 81 (His-81) interacts with substrate. The 5-imidazolinone (Ala-Gly) cross-link spans Ala-140–Gly-142. 2,3-didehydroalanine (Ser) is present on Ser-141. Substrate-binding residues include Asn-193 and Arg-298.

It belongs to the TAL/TAM family. Homotetramer; dimer of dimers. In terms of processing, contains an active site 4-methylidene-imidazol-5-one (MIO), which is formed autocatalytically by cyclization and dehydration of residues Ala-Ser-Gly.

The enzyme catalyses L-tyrosine = 3-amino-3-(4-hydroxyphenyl)propanoate. The catalysed reaction is L-tyrosine = (E)-4-coumarate + NH4(+). Has aminomutase and, to a lesser extent, ammonia-lyase activity. Primarily, catalyzes the rearrangement of L-tyrosine to R-beta-tyrosine, which is incorporated into secondary metabolites called chondramides. The aminomutase activity mainly produces R-beta-tyrosine but also S-beta tyrosine in smaller amounts. Does not accept D-tyrosine, L-histidine or L-phenylalanine as substrates. The sequence is that of Tyrosine 2,3-aminomutase from Chondromyces crocatus.